Here is a 267-residue protein sequence, read N- to C-terminus: L-aspartate dehydrogenase (267 aa).

Residues Ala124 and Asn190 each contribute to the NAD(+) site. His218 is an active-site residue.

The protein belongs to the L-aspartate dehydrogenase family.

The enzyme catalyses L-aspartate + NADP(+) + H2O = oxaloacetate + NH4(+) + NADPH + H(+). It catalyses the reaction L-aspartate + NAD(+) + H2O = oxaloacetate + NH4(+) + NADH + H(+). It functions in the pathway cofactor biosynthesis; NAD(+) biosynthesis; iminoaspartate from L-aspartate (dehydrogenase route): step 1/1. Its function is as follows. Specifically catalyzes the NAD or NADP-dependent dehydrogenation of L-aspartate to iminoaspartate. The protein is L-aspartate dehydrogenase of Methanocaldococcus jannaschii (strain ATCC 43067 / DSM 2661 / JAL-1 / JCM 10045 / NBRC 100440) (Methanococcus jannaschii).